The following is a 523-amino-acid chain: Sporulation protein 23 (523 aa).

As to quaternary structure, interacts with SPO1 in meiosis.

Its function is as follows. Regulates expression of PIS1. The chain is Sporulation protein 23 (SPO23) from Saccharomyces cerevisiae (strain ATCC 204508 / S288c) (Baker's yeast).